We begin with the raw amino-acid sequence, 591 residues long: Reduced folate transporter (591 aa).

Residue methionine 1 is modified to N-acetylmethionine. Residues 1 to 29 are Cytoplasmic-facing; sequence MVPSSPAVEKQVPVEPGPDPELRSWRHLV. Residue serine 5 is modified to Phosphoserine. The helical transmembrane segment at 30–50 threads the bilayer; it reads CYLCFYGFMAQIRPGESFITP. Isoleucine 48 and threonine 49 together coordinate folate. Residues 51–64 are Extracellular-facing; the sequence is YLLGPDKNFTREQV. N-linked (GlcNAc...) asparagine glycosylation occurs at asparagine 58. A helical transmembrane segment spans residues 65-87; it reads TNEITPVLSYSYLAVLVPVFLLT. Over 88–91 the chain is Cytoplasmic; the sequence is DYLR. Residues 92–112 traverse the membrane as a helical segment; it reads YTPVLLLQGLSFVSVWLLLLL. Residues 113 to 116 are Extracellular-facing; sequence GHSV. A helical transmembrane segment spans residues 117-139; sequence AHMQLMELFYSVTMAARIAYSSY. Folate is bound by residues glutamate 123 and arginine 133. 2',3'-cGAMP contacts are provided by arginine 133, isoleucine 134, serine 137, tyrosine 149, and arginine 157. At 140–153 the chain is on the cytoplasmic side; that stretch reads IFSLVRPARYQRVA. Residues 154-178 form a helical membrane-spanning segment; that stretch reads GYSRAAVLLGVFTSSVLGQLLVTVG. Valine 164 is a binding site for folate. At 179–183 the chain is on the extracellular side; that stretch reads RVSFS. A helical membrane pass occupies residues 184–202; sequence TLNYISLAFLTFSVVLALF. At 203-266 the chain is on the cytoplasmic side; that stretch reads LKRPKRSLFF…ELGDSLRRPQ (64 aa). Serine 225 carries the post-translational modification Phosphoserine. Residues 267-292 traverse the membrane as a helical segment; it reads LRLWSLWWVFNSAGYYLVVYYVHILW. Residues tyrosine 281, tyrosine 282, and tyrosine 286 each coordinate folate. Tyrosine 282 provides a ligand contact to 2',3'-cGAMP. Residues 293–304 are Extracellular-facing; it reads NEVDPTTNSARV. A helical transmembrane segment spans residues 305-327; it reads YNGAADAASTLLGAITSFAAGFV. Serine 321 serves as a coordination point for 2',3'-cGAMP. The Cytoplasmic segment spans residues 328–333; sequence KIRWAR. Residues 334–354 form a helical membrane-spanning segment; that stretch reads WSKLLIAGVTATQAGLVFLLA. The Extracellular segment spans residues 355–360; the sequence is HTRHPS. The helical transmembrane segment at 361–384 threads the bilayer; that stretch reads SIWLCYAAFVLFRGSYQFLVPIAT. The folate site is built by arginine 373 and glutamine 377. The 2',3'-cGAMP site is built by glutamine 377, proline 381, threonine 384, lysine 393, cysteine 396, and phenylalanine 400. At 385-398 the chain is on the cytoplasmic side; sequence FQIASSLSKELCAL. The helical transmembrane segment at 399 to 422 threads the bilayer; the sequence is VFGVNTFFATIVKTIITFIVSDVR. The required for substrate-binding stretch occupies residues 407 to 419; the sequence is ATIVKTIITFIVS. Topologically, residues 423 to 430 are extracellular; it reads GLGLPVRK. Residues 431–455 form a helical membrane-spanning segment; that stretch reads QFQLYSVYFLILSIIYFLGAMLDGL. Residues 456–591 lie on the Cytoplasmic side of the membrane; the sequence is RHCQRGHHPR…PSDGVQNVNQ (136 aa). Phosphoserine is present on residues serine 474, serine 485, serine 499, and serine 503.

The protein belongs to the reduced folate carrier (RFC) transporter (TC 2.A.48) family. Placenta, liver, and to a much smaller extent, in lung.

It localises to the cell membrane. The protein localises to the apical cell membrane. The protein resides in the basolateral cell membrane. It catalyses the reaction 5-amino-1-(5-phospho-beta-D-ribosyl)imidazole-4-carboxamide(in) + (6S)-5-methyl-5,6,7,8-tetrahydrofolate(out) = 5-amino-1-(5-phospho-beta-D-ribosyl)imidazole-4-carboxamide(out) + (6S)-5-methyl-5,6,7,8-tetrahydrofolate(in). The enzyme catalyses 2',3'-cGAMP(out) + 5-amino-1-(5-phospho-beta-D-ribosyl)imidazole-4-carboxamide(in) = 2',3'-cGAMP(in) + 5-amino-1-(5-phospho-beta-D-ribosyl)imidazole-4-carboxamide(out). The catalysed reaction is 3',3'-cGAMP(out) + 5-amino-1-(5-phospho-beta-D-ribosyl)imidazole-4-carboxamide(in) = 3',3'-cGAMP(in) + 5-amino-1-(5-phospho-beta-D-ribosyl)imidazole-4-carboxamide(out). In terms of biological role, antiporter that mediates the import of reduced folates or a subset of cyclic dinucleotides, driven by the export of organic anions. Acts as an importer of immunoreactive cyclic dinucleotides, such as cyclic GMP-AMP (2'-3'-cGAMP), an immune messenger produced in response to DNA virus in the cytosol, and its linkage isomer 3'-3'-cGAMP, thus playing a role in triggering larger immune responses. Mechanistically, acts as a secondary active transporter, which exports intracellular organic anions down their concentration gradients to facilitate the uptake of its substrates. Has high affinity for N5-methyltetrahydrofolate, the predominant circulating form of folate. Also mediates the import of antifolate drug methotrexate. 5-amino-4-imidazolecarboxamide riboside (AICAR), when phosphorylated to AICAR monophosphate, can serve as an organic anion for antiporter activity. This Homo sapiens (Human) protein is Reduced folate transporter.